The primary structure comprises 57 residues: Large ribosomal subunit protein eL20 (57 aa).

This sequence belongs to the eukaryotic ribosomal protein eL20 family. As to quaternary structure, part of the 50S ribosomal subunit. Binds 23S rRNA.

The chain is Large ribosomal subunit protein eL20 from Halorhabdus utahensis (strain DSM 12940 / JCM 11049 / AX-2).